Here is a 147-residue protein sequence, read N- to C-terminus: Anti-sigma F factor (147 aa).

This sequence belongs to the anti-sigma-factor family.

It carries out the reaction L-seryl-[protein] + ATP = O-phospho-L-seryl-[protein] + ADP + H(+). The enzyme catalyses L-threonyl-[protein] + ATP = O-phospho-L-threonyl-[protein] + ADP + H(+). Its function is as follows. Binds to sigma F and blocks its ability to form an RNA polymerase holoenzyme (E-sigma F). Phosphorylates SpoIIAA on a serine residue. This phosphorylation may enable SpoIIAA to act as an anti-anti-sigma factor that counteracts SpoIIAB and thus releases sigma F from inhibition. This Heyndrickxia coagulans (Weizmannia coagulans) protein is Anti-sigma F factor.